A 203-amino-acid polypeptide reads, in one-letter code: Large ribosomal subunit protein bL25 (203 aa).

The protein belongs to the bacterial ribosomal protein bL25 family. CTC subfamily. Part of the 50S ribosomal subunit; part of the 5S rRNA/L5/L18/L25 subcomplex. Contacts the 5S rRNA. Binds to the 5S rRNA independently of L5 and L18.

This is one of the proteins that binds to the 5S RNA in the ribosome where it forms part of the central protuberance. This is Large ribosomal subunit protein bL25 from Rickettsia peacockii (strain Rustic).